Consider the following 135-residue polypeptide: Peptide methionine sulfoxide reductase MsrB (135 aa).

Residues 13–135 (DADWREQLTP…NGHSMVFEPV (123 aa)) enclose the MsrB domain. Residues Cys-52, Cys-55, Cys-101, and Cys-104 each coordinate Zn(2+). Catalysis depends on Cys-124, which acts as the Nucleophile.

This sequence belongs to the MsrB Met sulfoxide reductase family. It depends on Zn(2+) as a cofactor.

It carries out the reaction L-methionyl-[protein] + [thioredoxin]-disulfide + H2O = L-methionyl-(R)-S-oxide-[protein] + [thioredoxin]-dithiol. The polypeptide is Peptide methionine sulfoxide reductase MsrB (Agrobacterium fabrum (strain C58 / ATCC 33970) (Agrobacterium tumefaciens (strain C58))).